Reading from the N-terminus, the 335-residue chain is DNA polymerase beta (335 aa).

K41 participates in a covalent cross-link: Glycyl lysine isopeptide (Lys-Gly) (interchain with G-Cter in ubiquitin). K60 is a binding site for K(+). K60 lines the Na(+) pocket. K61 is covalently cross-linked (Glycyl lysine isopeptide (Lys-Gly) (interchain with G-Cter in ubiquitin)). K(+) contacts are provided by L62 and V65. Residues L62 and V65 each coordinate Na(+). K72 (nucleophile; Schiff-base intermediate with DNA; for 5'-dRP lyase activity) is an active-site residue. K72 is modified (N6-acetyllysine). A Glycyl lysine isopeptide (Lys-Gly) (interchain with G-Cter in ubiquitin) cross-link involves residue K81. The residue at position 83 (R83) is an Omega-N-methylarginine; by PRMT6. K(+) contacts are provided by T101, V103, and I106. Residues T101, V103, and I106 each coordinate Na(+). A 2'-deoxyribonucleoside 5'-triphosphate is bound at residue R149. R152 carries the post-translational modification Omega-N-methylarginine; by PRMT6. Residues S180, R183, G189, and D190 each contribute to the a 2'-deoxyribonucleoside 5'-triphosphate site. Residues 183–192 (RGAESSGDMD) are DNA-binding. Mg(2+) is bound by residues D190, D192, and D256.

Belongs to the DNA polymerase type-X family. As to quaternary structure, monomer. Binds single-stranded DNA (ssDNA). Interacts with APEX1, LIG1, LIG3, FEN1, PCNA and XRCC1. Interacts with HUWE1/ARF-BP1, STUB1/CHIP and USP47. Interacts with FAM168A. Mg(2+) serves as cofactor. Post-translationally, methylation by PRMT6 stimulates the polymerase activity by enhancing DNA binding and processivity. Ubiquitinated at Lys-41, Lys-61 and Lys-81: monoubiquitinated by HUWE1/ARF-BP1. Monoubiquitinated protein is then the target of STUB1/CHIP, which catalyzes polyubiquitination from monoubiquitin, leading to degradation by the proteasome. USP47 mediates the deubiquitination of monoubiquitinated protein, preventing polyubiquitination by STUB1/CHIP and its subsequent degradation.

The protein resides in the nucleus. The protein localises to the cytoplasm. The enzyme catalyses DNA(n) + a 2'-deoxyribonucleoside 5'-triphosphate = DNA(n+1) + diphosphate. It catalyses the reaction a 5'-end 2'-deoxyribose-2'-deoxyribonucleotide-DNA = (2E,4S)-4-hydroxypenten-2-al-5-phosphate + a 5'-end 5'-phospho-2'-deoxyribonucleoside-DNA + H(+). The catalysed reaction is 2'-deoxyribonucleotide-(2'-deoxyribose 5'-phosphate)-2'-deoxyribonucleotide-DNA = a 3'-end 2'-deoxyribonucleotide-(2,3-dehydro-2,3-deoxyribose 5'-phosphate)-DNA + a 5'-end 5'-phospho-2'-deoxyribonucleoside-DNA + H(+). In terms of biological role, repair polymerase that plays a key role in base-excision repair. During this process, the damaged base is excised by specific DNA glycosylases, the DNA backbone is nicked at the abasic site by an apurinic/apyrimidic (AP) endonuclease, and POLB removes 5'-deoxyribose-phosphate from the preincised AP site acting as a 5'-deoxyribose-phosphate lyase (5'-dRP lyase); through its DNA polymerase activity, it adds one nucleotide to the 3' end of the arising single-nucleotide gap. Conducts 'gap-filling' DNA synthesis in a stepwise distributive fashion rather than in a processive fashion as for other DNA polymerases. It is also able to cleave sugar-phosphate bonds 3' to an intact AP site, acting as an AP lyase. This Bos taurus (Bovine) protein is DNA polymerase beta (POLB).